Consider the following 191-residue polypeptide: UPF0149 protein VCM66_2399 (191 aa).

The protein belongs to the UPF0149 family.

The sequence is that of UPF0149 protein VCM66_2399 from Vibrio cholerae serotype O1 (strain M66-2).